We begin with the raw amino-acid sequence, 1091 residues long: Leucine--tRNA ligase, cytoplasmic (1091 aa).

A 'HIGH' region motif is present at residues P53 to H63. A 'KMSKS' region motif is present at residues K715–S719. K718 serves as a coordination point for ATP.

Belongs to the class-I aminoacyl-tRNA synthetase family.

It is found in the cytoplasm. It localises to the cytosol. The enzyme catalyses tRNA(Leu) + L-leucine + ATP = L-leucyl-tRNA(Leu) + AMP + diphosphate. In terms of biological role, catalyzes the specific attachment of an amino acid to its cognate tRNA in a two step reaction: the amino acid (AA) is first activated by ATP to form AA-AMP and then transferred to the acceptor end of the tRNA. In Arabidopsis thaliana (Mouse-ear cress), this protein is Leucine--tRNA ligase, cytoplasmic.